A 382-amino-acid polypeptide reads, in one-letter code: Lipid-A-disaccharide synthase (382 aa).

The protein belongs to the LpxB family.

The enzyme catalyses 2-N,3-O-bis[(3R)-3-hydroxytetradecanoyl]-alpha-D-glucosaminyl 1-phosphate + UDP-2-N,3-O-bis[(3R)-3-hydroxytetradecanoyl]-alpha-D-glucosamine = lipid A disaccharide (E. coli) + UDP + H(+). It catalyses the reaction a lipid X + a UDP-2-N,3-O-bis[(3R)-3-hydroxyacyl]-alpha-D-glucosamine = a lipid A disaccharide + UDP + H(+). It participates in glycolipid biosynthesis; lipid IV(A) biosynthesis; lipid IV(A) from (3R)-3-hydroxytetradecanoyl-[acyl-carrier-protein] and UDP-N-acetyl-alpha-D-glucosamine: step 5/6. In terms of biological role, condensation of UDP-2,3-diacylglucosamine and 2,3-diacylglucosamine-1-phosphate to form lipid A disaccharide, a precursor of lipid A, a phosphorylated glycolipid that anchors the lipopolysaccharide to the outer membrane of the cell. The chain is Lipid-A-disaccharide synthase from Shigella flexneri.